Reading from the N-terminus, the 226-residue chain is Urease accessory protein UreE (226 aa).

The tract at residues 192 to 226 is disordered; sequence PHGSGLHIHSIHSHGDGHSHDHDHSHGDHDSDHKH. Basic and acidic residues predominate over residues 204-226; the sequence is SHGDGHSHDHDHSHGDHDSDHKH.

Belongs to the UreE family.

The protein resides in the cytoplasm. Its function is as follows. Involved in urease metallocenter assembly. Binds nickel. Probably functions as a nickel donor during metallocenter assembly. The sequence is that of Urease accessory protein UreE from Yersinia intermedia.